Reading from the N-terminus, the 659-residue chain is Pentatricopeptide repeat-containing protein At3g26782, mitochondrial (659 aa).

The transit peptide at 1 to 24 (MKVRSKKALFCSVSRLLHTERHTE) directs the protein to the mitochondrion. PPR repeat units lie at residues 40–74 (DVFS…SLYP), 75–109 (TRSS…GYQS), 110–144 (DIFV…NIVS), 145–171 (WTSM…LLVD), 182–216 (DSMG…GFDR), 217–249 (GVSV…IVDK), 250–284 (DRVS…KVVT), 286–320 (NAIT…GLED), 321–351 (DVIV…MKNK), 352–386 (NVRS…GVRP), 387–422 (NYIT…GVEP), and 423–453 (GLEH…MKMK). The interval 458–533 (IWSSLLAACR…PPGFSLLELN (76 aa)) is type E motif. Residues 534–564 (GEVHVFLIGDEEHPQREKIYEFLAELNRKLL) form a type E(+) motif region. A type DYW motif region spans residues 565-659 (EAGYVSNTSS…DGGCSCGDYW (95 aa)).

It belongs to the PPR family. PCMP-H subfamily.

It localises to the mitochondrion. The polypeptide is Pentatricopeptide repeat-containing protein At3g26782, mitochondrial (PCMP-H34) (Arabidopsis thaliana (Mouse-ear cress)).